The chain runs to 88 residues: UPF0297 protein LACR_0137 (88 aa).

It belongs to the UPF0297 family.

The protein is UPF0297 protein LACR_0137 of Lactococcus lactis subsp. cremoris (strain SK11).